Here is a 245-residue protein sequence, read N- to C-terminus: E3 ubiquitin-protein ligase RNF138 (245 aa).

The segment at 18 to 58 adopts an RING-type zinc-finger fold; the sequence is CPVCQEVLKTPVRTAACQHVFCRKCFLTAMRESGIHCPLCR. Zn(2+) is bound by residues cysteine 86, cysteine 89, histidine 101, and cysteine 105. Residues 86–105 form a C2HC RNF-type zinc finger; it reads CRCCSKKIKFYRMRHHYKSC. The disordered stretch occupies residues 128–154; the sequence is VRSSNRSETSASDNTETYQEDTSSSGH. Position 142 is a phosphothreonine (threonine 142). C2H2-type zinc fingers lie at residues 157 to 180 and 187 to 215; these read FKCPLCQESNFTRQRLLDHCNSNH and VTCPICVSLPWGDPSQITRNFVSHLNQRH. One can recognise a UIM domain in the interval 225–243; it reads LQLDEETQYQTAVEESFQV.

As to quaternary structure, interacts with NLK. Interacts with XRCC5/Ku80. Interacts with RBBP8/CtIP. Post-translationally, auto-ubiquitinated.

Its subcellular location is the chromosome. It carries out the reaction S-ubiquitinyl-[E2 ubiquitin-conjugating enzyme]-L-cysteine + [acceptor protein]-L-lysine = [E2 ubiquitin-conjugating enzyme]-L-cysteine + N(6)-ubiquitinyl-[acceptor protein]-L-lysine.. It participates in protein modification; protein ubiquitination. E3 ubiquitin-protein ligase involved in DNA damage response by promoting DNA resection and homologous recombination. Recruited to sites of double-strand breaks following DNA damage and specifically promotes double-strand break repair via homologous recombination. Two different, non-exclusive, mechanisms have been proposed. According to a report, regulates the choice of double-strand break repair by favoring homologous recombination over non-homologous end joining (NHEJ): acts by mediating ubiquitination of XRCC5/Ku80, leading to remove the Ku complex from DNA breaks, thereby promoting homologous recombination. According to another report, cooperates with UBE2Ds E2 ubiquitin ligases (UBE2D1, UBE2D2, UBE2D3 or UBE2D4) to promote homologous recombination by mediating ubiquitination of RBBP8/CtIP. Together with NLK, involved in the ubiquitination and degradation of TCF/LEF. Also exhibits auto-ubiquitination activity in combination with UBE2K. May act as a negative regulator in the Wnt/beta-catenin-mediated signaling pathway. The protein is E3 ubiquitin-protein ligase RNF138 of Mus musculus (Mouse).